The chain runs to 598 residues: Elongation factor 4 (598 aa).

The tr-type G domain maps to 4 to 186 (SHIRNFSIIA…VIVNKIPPPE (183 aa)). GTP-binding positions include 16-21 (DHGKST) and 133-136 (NKID).

This sequence belongs to the TRAFAC class translation factor GTPase superfamily. Classic translation factor GTPase family. LepA subfamily.

Its subcellular location is the cell inner membrane. The catalysed reaction is GTP + H2O = GDP + phosphate + H(+). Its function is as follows. Required for accurate and efficient protein synthesis under certain stress conditions. May act as a fidelity factor of the translation reaction, by catalyzing a one-codon backward translocation of tRNAs on improperly translocated ribosomes. Back-translocation proceeds from a post-translocation (POST) complex to a pre-translocation (PRE) complex, thus giving elongation factor G a second chance to translocate the tRNAs correctly. Binds to ribosomes in a GTP-dependent manner. The chain is Elongation factor 4 from Alteromonas mediterranea (strain DSM 17117 / CIP 110805 / LMG 28347 / Deep ecotype).